An 82-amino-acid polypeptide reads, in one-letter code: Sec-independent protein translocase protein TatA (82 aa).

The helical transmembrane segment at 1–21 (MGGISVWQLLIIAVIVVLLFG) threads the bilayer. The disordered stretch occupies residues 41–82 (KAMSEDEPAKKDDKDADFEPKSLEEQQKKEAAPESKKDKEQA). The span at 42-82 (AMSEDEPAKKDDKDADFEPKSLEEQQKKEAAPESKKDKEQA) shows a compositional bias: basic and acidic residues.

This sequence belongs to the TatA/E family. As to quaternary structure, the Tat system comprises two distinct complexes: a TatABC complex, containing multiple copies of TatA, TatB and TatC subunits, and a separate TatA complex, containing only TatA subunits. Substrates initially bind to the TatABC complex, which probably triggers association of the separate TatA complex to form the active translocon.

It localises to the cell inner membrane. Its function is as follows. Part of the twin-arginine translocation (Tat) system that transports large folded proteins containing a characteristic twin-arginine motif in their signal peptide across membranes. TatA could form the protein-conducting channel of the Tat system. This chain is Sec-independent protein translocase protein TatA, found in Vibrio campbellii (strain ATCC BAA-1116).